Consider the following 407-residue polypeptide: MTIENTQNINIDTLSRRYSTQIQRRKTRSVMVGNIGIGSDYPVAVQSMINEDTLDIEASTSAIRRLHEIGCEIVRLTVPSLSHAKAVGEIKRRLEQNYLPVPLVADVHHNGMKIALEVAKHVDKVRINPGLFVFSNPDPSRTEFSNSEISAIKEKIINNFEPIVNTLKAQNKALRIGVNHGSLAERMLFQYGDTPLGMVESAMEFVRICDSLDFHNIVISMKASRPPVMLAAYRLMADAMDKEGFNYPLHLGVTEAGDGDYGRIKSTVGIGTLLTEGLGDTIRVSLTEAPEKEIPVAYSILQTVGLRKTMVEYISCPSCGRTLFNLEEVVAKVRDATSHLTGLDIAVMGCIVNGPGEMADADYGYVGKGKGIIALYRGREEIRKVPEDEGVSALVELIKSDGKWIDP.

Residues cysteine 316, cysteine 319, cysteine 350, and glutamate 357 each contribute to the [4Fe-4S] cluster site.

This sequence belongs to the IspG family. The cofactor is [4Fe-4S] cluster.

It catalyses the reaction (2E)-4-hydroxy-3-methylbut-2-enyl diphosphate + 2 oxidized [2Fe-2S]-[ferredoxin] + H2O = 2-C-methyl-D-erythritol 2,4-cyclic diphosphate + 2 reduced [2Fe-2S]-[ferredoxin] + H(+). It functions in the pathway isoprenoid biosynthesis; isopentenyl diphosphate biosynthesis via DXP pathway; isopentenyl diphosphate from 1-deoxy-D-xylulose 5-phosphate: step 5/6. Converts 2C-methyl-D-erythritol 2,4-cyclodiphosphate (ME-2,4cPP) into 1-hydroxy-2-methyl-2-(E)-butenyl 4-diphosphate. The chain is 4-hydroxy-3-methylbut-2-en-1-yl diphosphate synthase (ferredoxin) from Prochlorococcus marinus (strain SARG / CCMP1375 / SS120).